Consider the following 340-residue polypeptide: 2-deoxy-scyllo-inosamine dehydrogenase (340 aa).

Cysteine 37, histidine 59, cysteine 89, cysteine 92, cysteine 95, cysteine 103, and glutamate 144 together coordinate Zn(2+).

Belongs to the zinc-containing alcohol dehydrogenase family. DOIA dehydrogenase subfamily. The cofactor is Zn(2+).

It carries out the reaction 2-deoxy-scyllo-inosamine + NADP(+) = 3-amino-2,3-dideoxy-scyllo-inosose + NADPH + H(+). It catalyses the reaction 2-deoxy-scyllo-inosamine + NAD(+) = 3-amino-2,3-dideoxy-scyllo-inosose + NADH + H(+). Its pathway is metabolic intermediate biosynthesis; 2-deoxystreptamine biosynthesis; 2-deoxystreptamine from D-glucose 6-phosphate: step 3/4. It functions in the pathway antibiotic biosynthesis; neomycin biosynthesis. Functionally, catalyzes the oxidation of 2-deoxy-scyllo-inosamine (DOIA) with NAD(+) or NADP(+), forming 3-amino-2,3-dideoxy-scyllo-inosose (amino-DOI). The polypeptide is 2-deoxy-scyllo-inosamine dehydrogenase (neoA) (Streptomyces fradiae (Streptomyces roseoflavus)).